The chain runs to 386 residues: Ferrochelatase (386 aa).

Positions 196 and 277 each coordinate Fe cation.

It belongs to the ferrochelatase family.

It localises to the cytoplasm. It carries out the reaction heme b + 2 H(+) = protoporphyrin IX + Fe(2+). Its pathway is porphyrin-containing compound metabolism; protoheme biosynthesis; protoheme from protoporphyrin-IX: step 1/1. Functionally, catalyzes the ferrous insertion into protoporphyrin IX. The protein is Ferrochelatase of Picosynechococcus sp. (strain ATCC 27264 / PCC 7002 / PR-6) (Agmenellum quadruplicatum).